A 1010-amino-acid chain; its full sequence is PHD finger protein 20 (1010 aa).

2 Tudor domains span residues 4–69 and 83–147; these read HPPN…RPLE and GSSE…GNAR. 2 disordered regions span residues 142 to 373 and 483 to 609; these read IVGN…EGQL and EKSP…GKLK. The segment covering 147-246 has biased composition (basic and acidic residues); it reads RPKETDHKSL…VEKKPEKDLV (100 aa). The residue at position 159 (S159) is a Phosphoserine. Positions 257 to 269 form a DNA-binding region, a.T hook; the sequence is KRKRGRPPSITPT. Over residues 267–280 the composition is skewed to polar residues; it reads TPTAVDSNSQTLQP. 3 stretches are compositionally biased toward basic and acidic residues: residues 292-325, 483-493, and 525-541; these read KRSDTPLKRPRLDKNSPQEQSKKRSENSDKDLSR, EKSPEPEEGPG, and AKEKEKTKEKKFKELVR. Residues 455 to 485 form a C2H2-type zinc finger; that stretch reads FRCKVLDCLKFFRKAKLLHYHMKYFHGMEKS. The segment covering 542 to 554 has biased composition (basic residues); the sequence is VKPKKKKKKKKKT. The PHD-type zinc finger occupies 657-703; the sequence is RCICEVQEENDFMIQCEECQCWQHGVCMGLLEENVPEKYTCYVCQDP. Residues 804–827 form a disordered region; that stretch reads RSEESPSYRTLNGAVEKPSPLPRS. K841 carries the post-translational modification N6-acetyllysine. 2 positions are modified to phosphoserine: S876 and S878. The segment at 877–902 is disordered; sequence LSPRLGWPIDQDRSRGDIDPKPSSPK. A compositionally biased stretch (basic and acidic residues) spans 886 to 902; it reads DQDRSRGDIDPKPSSPK.

In terms of assembly, homodimer; disulfide-linked. Component of some MLL1/MLL complex, at least composed of the core components KMT2A/MLL1, ASH2L, HCFC1, WDR5 and RBBP5, as well as the facultative components BACC1, CHD8, E2F6, HSP70, INO80C, KANSL1, LAS1L, MAX, MCRS1, MGA, MYST1/MOF, PELP1, PHF20, PRP31, RING2, RUVB1/TIP49A, RUVB2/TIP49B, SENP3, TAF1, TAF4, TAF6, TAF7, TAF9 and TEX10. Component of the NSL complex at least composed of MOF/KAT8, KANSL1, KANSL2, KANSL3, MCRS1, PHF20, OGT1/OGT, WDR5 and HCFC1. Post-translationally, ubiquitinated by TRIM26; leading to proteasomal degradation.

The protein localises to the nucleus. Contributes to methyllysine-dependent p53/TP53 stabilization and up-regulation after DNA damage. Methyllysine-binding protein, component of the MOF histone acetyltransferase protein complex. Not required for maintaining the global histone H4 'Lys-16' acetylation (H4K16ac) levels or locus specific histone acetylation, but instead works downstream in transcriptional regulation of MOF target genes. As part of the NSL complex it may be involved in acetylation of nucleosomal histone H4 on several lysine residues. This chain is PHD finger protein 20 (Phf20), found in Mus musculus (Mouse).